Reading from the N-terminus, the 239-residue chain is Glucosamine-6-phosphate deaminase (239 aa).

The Proton acceptor; for enolization step role is filled by Asp62. Catalysis depends on Asn128, which acts as the For ring-opening step. The active-site Proton acceptor; for ring-opening step is the His130. The For ring-opening step role is filled by Glu135.

Belongs to the glucosamine/galactosamine-6-phosphate isomerase family. NagB subfamily.

The catalysed reaction is alpha-D-glucosamine 6-phosphate + H2O = beta-D-fructose 6-phosphate + NH4(+). It functions in the pathway amino-sugar metabolism; N-acetylneuraminate degradation; D-fructose 6-phosphate from N-acetylneuraminate: step 5/5. In terms of biological role, catalyzes the reversible isomerization-deamination of glucosamine 6-phosphate (GlcN6P) to form fructose 6-phosphate (Fru6P) and ammonium ion. This is Glucosamine-6-phosphate deaminase from Lactobacillus johnsonii (strain CNCM I-12250 / La1 / NCC 533).